The sequence spans 145 residues: Protein SprT-like (145 aa).

The SprT-like domain occupies 5-140 (DYVREVSLAD…ACGRCHGRLI (136 aa)). His64 is a binding site for Zn(2+). The active site involves Glu65. His68 is a binding site for Zn(2+).

The protein belongs to the SprT family. Zn(2+) is required as a cofactor.

It localises to the cytoplasm. This Streptococcus equi subsp. equi (strain 4047) protein is Protein SprT-like.